The sequence spans 108 residues: Cell division topological specificity factor (108 aa).

The protein belongs to the MinE family.

In terms of biological role, prevents the cell division inhibition by proteins MinC and MinD at internal division sites while permitting inhibition at polar sites. This ensures cell division at the proper site by restricting the formation of a division septum at the midpoint of the long axis of the cell. The protein is Cell division topological specificity factor of Prochlorococcus marinus (strain AS9601).